A 957-amino-acid polypeptide reads, in one-letter code: Thioredoxin domain-containing protein 11 (957 aa).

Gly residues predominate over residues 1–13 (MSECGGRGGGGGS). The interval 1–47 (MSECGGRGGGGGSSSSSDDAEDEGGGGGPAGSGSLSPAPAASSEGRL) is disordered. Low complexity predominate over residues 32–44 (SGSLSPAPAASSE). The chain crosses the membrane as a helical span at residues 64 to 84 (LLCGAVALGCALLLALKFTCS). One can recognise a Thioredoxin 1 domain in the interval 91-213 (IPAKPPVSFF…IEKFVRRVMK (123 aa)). 2 disulfides stabilise this stretch: Cys-441/Cys-444 and Cys-691/Cys-694. One can recognise a Thioredoxin 2 domain in the interval 621–771 (LDPKQALMKF…LLRFILHHSD (151 aa)). Residues 785 to 889 (AECLQNEAVL…ADASETLLTE (105 aa)) adopt a coiled-coil conformation. Residues 904–925 (LEGRDGADDRVPPSKARSEHPE) show a composition bias toward basic and acidic residues. The segment at 904 to 957 (LEGRDGADDRVPPSKARSEHPEPPGAPRLPASTPLPANISSTLASEGSPENRTD) is disordered. Residues 941–951 (NISSTLASEGS) are compositionally biased toward polar residues.

The protein belongs to the protein disulfide isomerase family. In terms of assembly, interacts with the cytoplasmic part of DUOX1 and DUOX2. Interacts with TPO and CYBA.

Its subcellular location is the endoplasmic reticulum membrane. In terms of biological role, may act as a redox regulator involved in DUOX proteins folding. The interaction with DUOX1 and DUOX2 suggest that it belongs to a multiprotein complex constituting the thyroid H(2)O(2) generating system. It is however not sufficient to assist DUOX1 and DUOX2 in H(2)O(2) generation. The sequence is that of Thioredoxin domain-containing protein 11 (TXNDC11) from Bos taurus (Bovine).